The primary structure comprises 505 residues: RNA-splicing ligase RtcB homolog (505 aa).

Residues aspartate 119, cysteine 122, histidine 227, and histidine 259 each coordinate Mn(2+). A GMP-binding site is contributed by 226-230 (NHYAE). Position 300 is a phosphoserine (serine 300). Histidine 353 is a Mn(2+) binding site. Residues 353-354 (HN), 402-405 (GGTM), serine 409, and 428-431 (HGAG) contribute to the GMP site. The active-site GMP-histidine intermediate is the histidine 428. A Glycyl lysine isopeptide (Lys-Gly) (interchain with G-Cter in SUMO2) cross-link involves residue lysine 496. Lysine 504 is a binding site for GMP.

Belongs to the RtcB family. As to quaternary structure, catalytic component of the tRNA-splicing ligase complex. Mn(2+) serves as cofactor.

Its subcellular location is the nucleus. The protein resides in the cytoplasm. It carries out the reaction a 3'-end 3'-phospho-ribonucleotide-RNA + a 5'-end dephospho-ribonucleoside-RNA + GTP = a ribonucleotidyl-ribonucleotide-RNA + GMP + diphosphate. The catalysed reaction is a 3'-end 2',3'-cyclophospho-ribonucleotide-RNA + a 5'-end dephospho-ribonucleoside-RNA + GTP + H2O = a ribonucleotidyl-ribonucleotide-RNA + GMP + diphosphate + H(+). Catalytic subunit of the tRNA-splicing ligase complex that acts by directly joining spliced tRNA halves to mature-sized tRNAs by incorporating the precursor-derived splice junction phosphate into the mature tRNA as a canonical 3',5'-phosphodiester. May act as an RNA ligase with broad substrate specificity, and may function toward other RNAs. This Sus scrofa (Pig) protein is RNA-splicing ligase RtcB homolog.